The sequence spans 596 residues: Beta-fructofuranosidase, insoluble isoenzyme 7 (596 aa).

An N-terminal signal peptide occupies residues 1–24 (MARLGLAVCAASFHLFLLLASTSS). Substrate contacts are provided by residues 51 to 54 (WQND), Q70, and W78. D54 is a catalytic residue. The N-linked (GlcNAc...) asparagine glycan is linked to N82. Residues 115–116 (WS), 179–180 (RD), and E234 each bind substrate. An N-linked (GlcNAc...) asparagine glycan is attached at N330. A disulfide bridge connects residues C432 and C478. The N-linked (GlcNAc...) asparagine glycan is linked to N552.

It belongs to the glycosyl hydrolase 32 family.

Its subcellular location is the secreted. It is found in the extracellular space. It localises to the apoplast. The protein localises to the cell wall. It carries out the reaction Hydrolysis of terminal non-reducing beta-D-fructofuranoside residues in beta-D-fructofuranosides.. In terms of biological role, may play a role in sucrose partitioning during seed development. In Oryza sativa subsp. indica (Rice), this protein is Beta-fructofuranosidase, insoluble isoenzyme 7 (CIN7).